The sequence spans 461 residues: Probable carboxypeptidase MGYG_04702 (461 aa).

The signal sequence occupies residues 1–20 (MQKTYLLALVSLLASSLVEA). 2 N-linked (GlcNAc...) asparagine glycosylation sites follow: asparagine 48 and asparagine 99. Residue aspartate 176 participates in Zn(2+) binding. Glutamate 208 functions as the Proton acceptor in the catalytic mechanism. Glutamate 209 is a binding site for Zn(2+). Asparagine 396 carries N-linked (GlcNAc...) asparagine glycosylation.

This sequence belongs to the peptidase M20A family. The cofactor is Zn(2+).

It localises to the secreted. This is Probable carboxypeptidase MGYG_04702 from Arthroderma gypseum (strain ATCC MYA-4604 / CBS 118893) (Microsporum gypseum).